We begin with the raw amino-acid sequence, 503 residues long: Cobyric acid synthase (503 aa).

Positions 255–444 (AIDVAVIRCP…MHDLFHNDAF (190 aa)) constitute a GATase cobBQ-type domain. Cys-337 (nucleophile) is an active-site residue. His-436 is a catalytic residue.

This sequence belongs to the CobB/CobQ family. CobQ subfamily.

It participates in cofactor biosynthesis; adenosylcobalamin biosynthesis. Functionally, catalyzes amidations at positions B, D, E, and G on adenosylcobyrinic A,C-diamide. NH(2) groups are provided by glutamine, and one molecule of ATP is hydrogenolyzed for each amidation. This is Cobyric acid synthase from Geobacillus kaustophilus (strain HTA426).